The primary structure comprises 89 residues: uncharacterized protein (89 aa).

A helical transmembrane segment spans residues 28 to 50 (LYLDLGFSALLFYNSNLLFSFIL).

The protein localises to the membrane. This is an uncharacterized protein from Archaeoglobus fulgidus (strain ATCC 49558 / DSM 4304 / JCM 9628 / NBRC 100126 / VC-16).